The primary structure comprises 152 residues: Small ribosomal subunit protein bS6 (152 aa).

Belongs to the bacterial ribosomal protein bS6 family.

Its function is as follows. Binds together with bS18 to 16S ribosomal RNA. The protein is Small ribosomal subunit protein bS6 of Bdellovibrio bacteriovorus (strain ATCC 15356 / DSM 50701 / NCIMB 9529 / HD100).